A 293-amino-acid chain; its full sequence is Outer membrane protein assembly factor BamD (293 aa).

The signal sequence occupies residues 1 to 26; sequence MIQRPTFFSPIHLLAVLLATFILITG. C27 carries the N-palmitoyl cysteine lipid modification. C27 carries the S-diacylglycerol cysteine lipid modification.

The protein belongs to the BamD family. As to quaternary structure, part of the Bam complex.

Its subcellular location is the cell outer membrane. Functionally, part of the outer membrane protein assembly complex, which is involved in assembly and insertion of beta-barrel proteins into the outer membrane. The chain is Outer membrane protein assembly factor BamD from Xylella fastidiosa (strain Temecula1 / ATCC 700964).